Consider the following 206-residue polypeptide: Guanylate kinase (206 aa).

One can recognise a Guanylate kinase-like domain in the interval 5–183 (FNLLILSGPS…SKEIILSIAK (179 aa)). 12 to 19 (GPSGAGKS) provides a ligand contact to ATP.

It belongs to the guanylate kinase family.

The protein localises to the cytoplasm. The enzyme catalyses GMP + ATP = GDP + ADP. Functionally, essential for recycling GMP and indirectly, cGMP. The chain is Guanylate kinase from Helicobacter pylori (strain HPAG1).